Here is a 154-residue protein sequence, read N- to C-terminus: Snaclec lebecin subunit beta (154 aa).

A signal peptide spans 1-23 (MGRIIFVSFGLLVVFLSLSGTGA). 3 disulfide bridges follow: Cys-25/Cys-36, Cys-53/Cys-150, and Cys-125/Cys-142. The region spanning 32 to 151 (DEEHCYYVFF…CGDDYPFVCK (120 aa)) is the C-type lectin domain. An N-linked (GlcNAc...) asparagine glycan is attached at Asn-139.

In terms of assembly, heterodimer with the alpha subunit (AC W5XDM0); disulfide-linked. In terms of tissue distribution, expressed by the venom gland.

The protein resides in the secreted. Inhibits human breast cancer cells (MDA-MB231) migration and proliferation, as well as their adhesion to fibrinogen and fibronectin. This inhibition may be due to the binding to receptors of the integrin family, probably alpha-v/beta-3 (ITGAV/ITGB3) (40% inhibition of cell adhesion) and alpha-5/beta-1 (ITGA5/ITGB1) (by comparison with lebectin). This chain is Snaclec lebecin subunit beta, found in Macrovipera lebetinus (Levantine viper).